Reading from the N-terminus, the 218-residue chain is uncharacterized protein (218 aa).

This sequence belongs to the mimivirus L6/L7/L57 family.

This is an uncharacterized protein from Acanthamoeba polyphaga mimivirus (APMV).